The following is a 799-amino-acid chain: Protein scabrous (799 aa).

The N-terminal stretch at 1-51 (MRDWQTFPDLQKKKVSRDHLNCPATMAGSNVLWPILLAVVLLQISVAFVSG) is a signal peptide. Positions 287-316 (TRKDGSSASVEEESGSQEANQEQTGLETTA) are disordered. N-linked (GlcNAc...) asparagine glycosylation occurs at asparagine 372. Positions 489–498 (LNKPHKRPHH) are enriched in basic residues. Positions 489–509 (LNKPHKRPHHQNVQAQMPQDD) are disordered. Residues 533–737 (AIINKLPHDC…SSRMLVKRLP (205 aa)) form the Fibrinogen C-terminal domain. A disulfide bridge connects residues cysteine 542 and cysteine 568. Asparagine 587, asparagine 618, and asparagine 660 each carry an N-linked (GlcNAc...) asparagine glycan. An intrachain disulfide couples cysteine 687 to cysteine 700. 2 N-linked (GlcNAc...) asparagine glycosylation sites follow: asparagine 744 and asparagine 787.

Post-translationally, possesses five pairs of dibasic residues that may be the target of proteolytic processing.

It is found in the late endosome. Functionally, involved in regulation of neurogenesis. May encode a lateral inhibitor of R8 differentiation. In conjunction with Gp150, promotes Notch activation in response to Delta by regulating acquisition of insensitivity to Delta in a subset of cells. In Drosophila melanogaster (Fruit fly), this protein is Protein scabrous (sca).